The sequence spans 950 residues: Synaptotagmin-like protein 2 (950 aa).

Residues 1–57 (MIDLSFLTEEEQDAILKVLQRDAALKRAEEERVRHLPEKIKDDQQLKNMSGQWFYEA) form the RabBD domain. Disordered regions lie at residues 78 to 98 (RKKLPAAAEQNKDTAMRAKES), 116 to 289 (VEEP…ETLR), and 361 to 620 (ESDQ…SSSG). Positions 87 to 97 (QNKDTAMRAKE) are enriched in basic and acidic residues. Polar residues-rich tracts occupy residues 140–150 (IDMSQESTRTP) and 173–183 (LQQTKPEQSKT). A compositionally biased stretch (basic and acidic residues) spans 193–205 (KEGELSESKEKSS). Positions 219–230 (QTVSTEPENASH) are enriched in polar residues. Over residues 246–264 (NDLEKDDNQSFPRQRRDSL) the composition is skewed to basic and acidic residues. Residues 434–445 (VESSSVINGQQE) are compositionally biased toward polar residues. Composition is skewed to basic and acidic residues over residues 479-502 (HSFRDHRQGSEEEHSPVLKTLERR) and 531-544 (ELVRSAEDDQKADQ). The segment covering 557 to 567 (TVPSLPDNQFS) has biased composition (polar residues). Over residues 608-620 (SPSSLTNLSSSSG) the composition is skewed to low complexity. C2 domains follow at residues 644–769 (VKGS…LKWY) and 784–913 (NRGE…VDWM).

As to quaternary structure, monomer. Binds NRXN1. Binds RAB27A that has been activated by GTP-binding. Interacts with RAB27B. Isoform 1 is highly susceptible to proteolytic degradation and is stabilized by the interaction with RAB27A. As to expression, highly expressed in brain, lung, kidney, testis and in embryos after day 7. Detected at lower levels in skeletal muscle. Expressed in pancreatic alpha cells. Isoform 6 is highly expressed in brain, but not detectable in the other tissues tested. Isoform 1 is expressed abundantly in the stomach and is predominantly localized at the apical region of gastric-surface mucus cells. Isoform 11 is expressed in cytotoxic T-lymphocytes (CTL).

Its subcellular location is the melanosome membrane. The protein localises to the cell membrane. In terms of biological role, isoform 11 acts as a RAB27A effector protein and plays a role in cytotoxic granule exocytosis in lymphocytes. Required for cytotoxic granule docking at the immunologic synapse. Isoform 1 may play a role in melanosome transport and vesicle trafficking. It controls melanosome distribution in the cell periphery and regulates melanocyte morphology. Isoform 1 acts as a positive mediator of mucus secretion by the surface mucus cells of the stomach. Mediates basal mucus secretion by gastric surface cells by promoting the proper granule biognesis and docking of mucus granules with the apical plasma membrane. This chain is Synaptotagmin-like protein 2 (Sytl2), found in Mus musculus (Mouse).